A 149-amino-acid polypeptide reads, in one-letter code: 3-dehydroquinate dehydratase (149 aa).

Tyr-22 functions as the Proton acceptor in the catalytic mechanism. The substrate site is built by Asn-73, His-79, and Asp-86. His-99 acts as the Proton donor in catalysis. Residues 100–101 (LS) and Arg-110 contribute to the substrate site.

Belongs to the type-II 3-dehydroquinase family. In terms of assembly, homododecamer.

The enzyme catalyses 3-dehydroquinate = 3-dehydroshikimate + H2O. It functions in the pathway metabolic intermediate biosynthesis; chorismate biosynthesis; chorismate from D-erythrose 4-phosphate and phosphoenolpyruvate: step 3/7. In terms of biological role, catalyzes a trans-dehydration via an enolate intermediate. In Prochlorococcus marinus (strain SARG / CCMP1375 / SS120), this protein is 3-dehydroquinate dehydratase.